Reading from the N-terminus, the 479-residue chain is Ribosomal RNA small subunit methyltransferase F (479 aa).

Residues 125-131 (AAAPGSK), E149, D176, and D194 contribute to the S-adenosyl-L-methionine site. The Nucleophile role is filled by C247.

Belongs to the class I-like SAM-binding methyltransferase superfamily. RsmB/NOP family.

It localises to the cytoplasm. The enzyme catalyses cytidine(1407) in 16S rRNA + S-adenosyl-L-methionine = 5-methylcytidine(1407) in 16S rRNA + S-adenosyl-L-homocysteine + H(+). In terms of biological role, specifically methylates the cytosine at position 1407 (m5C1407) of 16S rRNA. In Escherichia coli (strain SE11), this protein is Ribosomal RNA small subunit methyltransferase F.